The following is a 753-amino-acid chain: Bifunctional terpene synthase FUP1 (753 aa).

The terpene cyclase stretch occupies residues 1–329 (MGPLLYRSRH…CSACPRQNAW (329 aa)). A Mg(2+)-binding site is contributed by aspartate 96. Residues 96–100 (DDTGE) carry the DDXXD 1 motif. The NSE/DTE signature appears at 231–239 (NDYFSWERE). Positions 330–745 (KNDTLSNGQN…MLRLCLAKLS (416 aa)) are prenyltransferase. The isopentenyl diphosphate site is built by lysine 461, arginine 464, and histidine 493. Mg(2+) contacts are provided by aspartate 500 and aspartate 504. Positions 500-504 (DDLED) match the DDXXD 2 motif. Arginine 509 serves as a coordination point for dimethylallyl diphosphate. Residue arginine 510 participates in isopentenyl diphosphate binding. Positions 587, 588, 625, 632, 640, and 650 each coordinate dimethylallyl diphosphate.

In the N-terminal section; belongs to the terpene synthase family. It in the C-terminal section; belongs to the FPP/GGPP synthase family. Hexamer. It depends on Mg(2+) as a cofactor.

The catalysed reaction is isopentenyl diphosphate + (2E,6E)-farnesyl diphosphate = (2E,6E,10E)-geranylgeranyl diphosphate + diphosphate. It functions in the pathway secondary metabolite biosynthesis; terpenoid biosynthesis. Functionally, bifunctional terpene synthase; part of the gene cluster that mediates the biosynthesis of the mycotoxin fusaproliferin (FUP) that belongs to the class of bicyclic sesterterpenoids. The FUP biosynthetic pathway starts with the enzyme encoded by FUP1 that combines a C-terminal prenyltransferase domain responsible for the synthesis of geranylgeranyl diphosphate with the N-terminal terpene cyclase domain, to yield preterpestacin I. Preterpestacin I is then decorated by oxygenation steps that are catalyzed by two cytochrome P450 monooxygenases. First, FUP2 introduces a hydroxyl group at the C-24 position resulting in the formation of preterpestacin IIa, which can be further oxidized. The second P450 monooxygenase catalyzes the hydroxylation at C-16 and C-17 of preterpestacin IIa, producing preterpestacin III. Subsequently, the FAD-dependent oxidoreductase FUP4 catalyzes the oxidation of the hydroxy group at the C-16 position to a keto group, leading to the formation of (-)-terpestacin, which is the immediate precursor of FUP. The final step in the proposed biosynthetic pathway is the addition of an acetyl group at the C-24 position of terpestacin, which is catalyzed by the acetyltransferase FUP5. This is Bifunctional terpene synthase FUP1 from Fusarium proliferatum (strain ET1) (Orchid endophyte fungus).